Here is a 330-residue protein sequence, read N- to C-terminus: Diacylglycerol acyltransferase/mycolyltransferase Ag85A (330 aa).

The signal sequence occupies residues Met1–Ala42. Position 84–85 (Leu84–Arg85) interacts with substrate. Residues Phe100–Val110 form a fibronectin-binding region. Cysteines 129 and 134 form a disulfide. 2 residues coordinate substrate: Ser168 and Asp196. The Nucleophile role is filled by Ser168. Glu272 is an active-site residue. Residues Leu274–Thr277, Lys281, and His304–Trp306 contribute to the substrate site. Residue His304 is part of the active site.

This sequence belongs to the mycobacterial A85 antigen family. As to quaternary structure, homodimer.

It localises to the secreted. The protein resides in the cell wall. It is found in the cytoplasm. The enzyme catalyses an acyl-CoA + a 1,2-diacyl-sn-glycerol = a triacyl-sn-glycerol + CoA. It carries out the reaction 2 alpha,alpha'-trehalose 6-mycolate = alpha,alpha'-trehalose 6,6'-bismycolate + alpha,alpha-trehalose. Functionally, the antigen 85 proteins (FbpA, FbpB, FbpC) are responsible for the high affinity of mycobacteria for fibronectin, a large adhesive glycoprotein, which facilitates the attachment of M.tuberculosis to murine alveolar macrophages (AMs). They also help to maintain the integrity of the cell wall by catalyzing the transfer of mycolic acids to cell wall arabinogalactan, and through the synthesis of alpha,alpha-trehalose dimycolate (TDM, cord factor). They catalyze the transfer of a mycoloyl residue from one molecule of alpha,alpha-trehalose monomycolate (TMM) to another TMM, leading to the formation of TDM. FbpA mediates triacylglycerol (TAG) formation with long-chain acyl-CoA as the acyl donor and 1,2-dipalmitoyl-sn-glycerol (1,2-dipalmitin) as the acyl acceptor. It has a preference for C26:0-CoA over C18:1-CoA. This is Diacylglycerol acyltransferase/mycolyltransferase Ag85A (fbpA) from Mycobacterium leprae (strain TN).